The chain runs to 103 residues: Sec-independent protein translocase protein TatA (103 aa).

Residues 1 to 21 (MSLGPWEIAIIVLLIIVLFGA) traverse the membrane as a helical segment. The disordered stretch occupies residues 42-103 (VKEMQKDDET…QNYEDPNRTP (62 aa)). Residues 52–90 (PAQPEQQPQGYQHPQQIEAPQNLQQPNFQQHYQNQPQQP) are compositionally biased toward low complexity. A compositionally biased stretch (basic and acidic residues) spans 94–103 (QNYEDPNRTP).

This sequence belongs to the TatA/E family. In terms of assembly, the Tat system comprises two distinct complexes: a TatABC complex, containing multiple copies of TatA, TatB and TatC subunits, and a separate TatA complex, containing only TatA subunits. Substrates initially bind to the TatABC complex, which probably triggers association of the separate TatA complex to form the active translocon.

The protein resides in the cell membrane. Part of the twin-arginine translocation (Tat) system that transports large folded proteins containing a characteristic twin-arginine motif in their signal peptide across membranes. TatA could form the protein-conducting channel of the Tat system. The polypeptide is Sec-independent protein translocase protein TatA (Corynebacterium efficiens (strain DSM 44549 / YS-314 / AJ 12310 / JCM 11189 / NBRC 100395)).